A 387-amino-acid chain; its full sequence is Eukaryotic translation initiation factor 3 subunit M (387 aa).

The PCI domain occupies L181–H340.

It belongs to the eIF-3 subunit M family. As to quaternary structure, component of the eukaryotic translation initiation factor 3 (eIF-3) complex. The eIF-3 complex interacts with pix.

The protein resides in the cytoplasm. It is found in the golgi apparatus. Its function is as follows. Component of the eukaryotic translation initiation factor 3 (eIF-3) complex, which is involved in protein synthesis of a specialized repertoire of mRNAs and, together with other initiation factors, stimulates binding of mRNA and methionyl-tRNAi to the 40S ribosome. The eIF-3 complex specifically targets and initiates translation of a subset of mRNAs involved in cell proliferation. This is Eukaryotic translation initiation factor 3 subunit M from Drosophila sechellia (Fruit fly).